The chain runs to 192 residues: Potassium-transporting ATPase KdpC subunit (192 aa).

Residues 7–27 (PLIVIFAVLTAVTGLAYPAVM) form a helical membrane-spanning segment.

The protein belongs to the KdpC family. The system is composed of three essential subunits: KdpA, KdpB and KdpC.

The protein resides in the cell inner membrane. Part of the high-affinity ATP-driven potassium transport (or Kdp) system, which catalyzes the hydrolysis of ATP coupled with the electrogenic transport of potassium into the cytoplasm. This subunit acts as a catalytic chaperone that increases the ATP-binding affinity of the ATP-hydrolyzing subunit KdpB by the formation of a transient KdpB/KdpC/ATP ternary complex. This chain is Potassium-transporting ATPase KdpC subunit, found in Paraburkholderia phytofirmans (strain DSM 17436 / LMG 22146 / PsJN) (Burkholderia phytofirmans).